A 553-amino-acid polypeptide reads, in one-letter code: Chaperonin GroEL (553 aa).

ATP-binding positions include 29 to 32 (TLGP), K50, 86 to 90 (DGTTT), G424, and D504.

This sequence belongs to the chaperonin (HSP60) family. As to quaternary structure, forms a cylinder of 14 subunits composed of two heptameric rings stacked back-to-back. Interacts with the co-chaperonin GroES.

It is found in the cytoplasm. It catalyses the reaction ATP + H2O + a folded polypeptide = ADP + phosphate + an unfolded polypeptide.. Together with its co-chaperonin GroES, plays an essential role in assisting protein folding. The GroEL-GroES system forms a nano-cage that allows encapsulation of the non-native substrate proteins and provides a physical environment optimized to promote and accelerate protein folding. This chain is Chaperonin GroEL, found in Koribacter versatilis (strain Ellin345).